The sequence spans 209 residues: Glycerol-3-phosphate acyltransferase (209 aa).

The next 5 membrane-spanning stretches (helical) occupy residues 5–25 (IIGM…LWIG), 50–70 (LGFK…TLAA), 74–94 (YFLG…ASLG), 115–135 (ILLA…IFVL), and 151–171 (AIFI…AGIL).

This sequence belongs to the PlsY family. As to quaternary structure, probably interacts with PlsX.

The protein localises to the cell membrane. It catalyses the reaction an acyl phosphate + sn-glycerol 3-phosphate = a 1-acyl-sn-glycero-3-phosphate + phosphate. It functions in the pathway lipid metabolism; phospholipid metabolism. Its function is as follows. Catalyzes the transfer of an acyl group from acyl-phosphate (acyl-PO(4)) to glycerol-3-phosphate (G3P) to form lysophosphatidic acid (LPA). This enzyme utilizes acyl-phosphate as fatty acyl donor, but not acyl-CoA or acyl-ACP. This chain is Glycerol-3-phosphate acyltransferase, found in Limosilactobacillus reuteri (strain DSM 20016) (Lactobacillus reuteri).